The chain runs to 418 residues: Tryptophan synthase beta chain (418 aa).

Position 109 is an N6-(pyridoxal phosphate)lysine (K109).

Belongs to the TrpB family. As to quaternary structure, tetramer of two alpha and two beta chains. Pyridoxal 5'-phosphate serves as cofactor.

It catalyses the reaction (1S,2R)-1-C-(indol-3-yl)glycerol 3-phosphate + L-serine = D-glyceraldehyde 3-phosphate + L-tryptophan + H2O. It functions in the pathway amino-acid biosynthesis; L-tryptophan biosynthesis; L-tryptophan from chorismate: step 5/5. The beta subunit is responsible for the synthesis of L-tryptophan from indole and L-serine. The sequence is that of Tryptophan synthase beta chain from Thermus thermophilus (strain ATCC 27634 / DSM 579 / HB8).